Reading from the N-terminus, the 180-residue chain is Ribosome-recycling factor (180 aa).

It belongs to the RRF family.

Its subcellular location is the cytoplasm. Responsible for the release of ribosomes from messenger RNA at the termination of protein biosynthesis. May increase the efficiency of translation by recycling ribosomes from one round of translation to another. The protein is Ribosome-recycling factor of Chlamydia abortus (strain DSM 27085 / S26/3) (Chlamydophila abortus).